The primary structure comprises 92 residues: Putative phosphotransferase enzyme IIB component SgcB (92 aa).

The region spanning 1–92 is the PTS EIIB type-2 domain; that stretch reads MKKILVACGT…KQQIKALLTQ (92 aa). Catalysis depends on C8, which acts as the Phosphocysteine intermediate.

The protein resides in the cytoplasm. The phosphoenolpyruvate-dependent sugar phosphotransferase system (sugar PTS), a major carbohydrate active -transport system, catalyzes the phosphorylation of incoming sugar substrates concomitantly with their translocation across the cell membrane. In Escherichia coli (strain K12), this protein is Putative phosphotransferase enzyme IIB component SgcB (sgcB).